A 280-amino-acid polypeptide reads, in one-letter code: Acetyl-coenzyme A carboxylase carboxyl transferase subunit beta (280 aa).

A CoA carboxyltransferase N-terminal domain is found at 25-280 (VMRECPICHA…RLHTKENAYG (256 aa)). Zn(2+) contacts are provided by cysteine 29, cysteine 32, cysteine 47, and cysteine 50. The C4-type zinc finger occupies 29 to 50 (CPICHAKFLSMRLGRDHTCPKC).

This sequence belongs to the AccD/PCCB family. As to quaternary structure, acetyl-CoA carboxylase is a heterohexamer composed of biotin carboxyl carrier protein (AccB), biotin carboxylase (AccC) and two subunits each of ACCase subunit alpha (AccA) and ACCase subunit beta (AccD). Requires Zn(2+) as cofactor.

It is found in the cytoplasm. It carries out the reaction N(6)-carboxybiotinyl-L-lysyl-[protein] + acetyl-CoA = N(6)-biotinyl-L-lysyl-[protein] + malonyl-CoA. The protein operates within lipid metabolism; malonyl-CoA biosynthesis; malonyl-CoA from acetyl-CoA: step 1/1. Component of the acetyl coenzyme A carboxylase (ACC) complex. Biotin carboxylase (BC) catalyzes the carboxylation of biotin on its carrier protein (BCCP) and then the CO(2) group is transferred by the transcarboxylase to acetyl-CoA to form malonyl-CoA. The polypeptide is Acetyl-coenzyme A carboxylase carboxyl transferase subunit beta (Lactobacillus helveticus (strain DPC 4571)).